A 413-amino-acid polypeptide reads, in one-letter code: Arginine biosynthesis bifunctional protein ArgJ (413 aa).

Substrate-binding residues include T160, K186, T197, E284, N408, and S413. T197 acts as the Nucleophile in catalysis.

Belongs to the ArgJ family. Heterotetramer of two alpha and two beta chains.

The protein resides in the cytoplasm. It catalyses the reaction N(2)-acetyl-L-ornithine + L-glutamate = N-acetyl-L-glutamate + L-ornithine. The catalysed reaction is L-glutamate + acetyl-CoA = N-acetyl-L-glutamate + CoA + H(+). It participates in amino-acid biosynthesis; L-arginine biosynthesis; L-ornithine and N-acetyl-L-glutamate from L-glutamate and N(2)-acetyl-L-ornithine (cyclic): step 1/1. Its pathway is amino-acid biosynthesis; L-arginine biosynthesis; N(2)-acetyl-L-ornithine from L-glutamate: step 1/4. In terms of biological role, catalyzes two activities which are involved in the cyclic version of arginine biosynthesis: the synthesis of N-acetylglutamate from glutamate and acetyl-CoA as the acetyl donor, and of ornithine by transacetylation between N(2)-acetylornithine and glutamate. This chain is Arginine biosynthesis bifunctional protein ArgJ, found in Burkholderia pseudomallei (strain K96243).